The sequence spans 202 residues: Recombination protein RecR (202 aa).

The segment at 61–76 adopts a C4-type zinc-finger fold; sequence CARCNSFTEDEVCATC. The Toprim domain occupies 84 to 179; it reads GLLCIVETPA…KVTRLARGVP (96 aa).

It belongs to the RecR family.

In terms of biological role, may play a role in DNA repair. It seems to be involved in an RecBC-independent recombinational process of DNA repair. It may act with RecF and RecO. This Bordetella pertussis (strain Tohama I / ATCC BAA-589 / NCTC 13251) protein is Recombination protein RecR.